Consider the following 140-residue polypeptide: Nucleoside diphosphate kinase (140 aa).

ATP contacts are provided by lysine 11, phenylalanine 59, arginine 87, threonine 93, arginine 104, and asparagine 114. The Pros-phosphohistidine intermediate role is filled by histidine 117.

It belongs to the NDK family. Homotetramer. The cofactor is Mg(2+).

Its subcellular location is the cytoplasm. It catalyses the reaction a 2'-deoxyribonucleoside 5'-diphosphate + ATP = a 2'-deoxyribonucleoside 5'-triphosphate + ADP. It carries out the reaction a ribonucleoside 5'-diphosphate + ATP = a ribonucleoside 5'-triphosphate + ADP. In terms of biological role, major role in the synthesis of nucleoside triphosphates other than ATP. The ATP gamma phosphate is transferred to the NDP beta phosphate via a ping-pong mechanism, using a phosphorylated active-site intermediate. The sequence is that of Nucleoside diphosphate kinase from Rhodopseudomonas palustris (strain ATCC BAA-98 / CGA009).